A 240-amino-acid chain; its full sequence is tRNA pseudouridine synthase B (240 aa).

The active-site Nucleophile is aspartate 54.

It belongs to the pseudouridine synthase TruB family. Type 1 subfamily.

It carries out the reaction uridine(55) in tRNA = pseudouridine(55) in tRNA. Its function is as follows. Responsible for synthesis of pseudouridine from uracil-55 in the psi GC loop of transfer RNAs. The sequence is that of tRNA pseudouridine synthase B from Chlorobaculum tepidum (strain ATCC 49652 / DSM 12025 / NBRC 103806 / TLS) (Chlorobium tepidum).